A 311-amino-acid polypeptide reads, in one-letter code: 33 kDa chaperonin (311 aa).

2 disulfide bridges follow: cysteine 240–cysteine 242 and cysteine 273–cysteine 276.

It belongs to the HSP33 family. In terms of processing, under oxidizing conditions two disulfide bonds are formed involving the reactive cysteines. Under reducing conditions zinc is bound to the reactive cysteines and the protein is inactive.

It localises to the cytoplasm. Its function is as follows. Redox regulated molecular chaperone. Protects both thermally unfolding and oxidatively damaged proteins from irreversible aggregation. Plays an important role in the bacterial defense system toward oxidative stress. This is 33 kDa chaperonin from Trichodesmium erythraeum (strain IMS101).